The primary structure comprises 547 residues: MARYVFITGGVVSSLGKGLASAALGALLQARGFSVRLRKLDPYLNVDPGTMSPFEHGEVFVTDDGAETDLDLGHYERFTGVSARKTDSVSSGRIYSNVLEKERRGDYLGKTIQVIPHVTNEIKDFLRVGEDEVDFMLCEIGGTVGDIEGLPFFEAIRQFAQDKPRGQCIFVHLTLLPYVSASHELKTKPTQHSVKELRSIGIAPDVLLLRSEHPIPEKEREKIALFCNVRKEAVIAAYDLKTIYEAPLAYHREGLDQAVLDAFGISPAPKPNLDRWVDVMDRLEHAEGEVRVAIVGKYTQLEDAYKSIAEALTHGGMANRTRVRAEWINAELFEREDPSPFLEGFHAILVPGGFGERGTEGKIRAAQYAREKGIPYLGICLGMQMAVIEAARNLAHVKDAGSEEFDHEIGRKRYTPVVYHLKEWIQGNHIVERKHDDDKGGTMRLGAYTAALAAGSRVATIYGSTEIEERHRHRYEVDVRYREALEGCGLTFSGMSPDGRLPEIVEIKDHPWFVGVQFHPELKSKPFAPHPLFADFIRAAVEVSRLV.

An amidoligase domain region spans residues 1–265 (MARYVFITGG…DQAVLDAFGI (265 aa)). S13 lines the CTP pocket. A UTP-binding site is contributed by S13. Residues 14 to 19 (SLGKGL) and D71 contribute to the ATP site. D71 and E139 together coordinate Mg(2+). CTP-binding positions include 146–148 (DIE), 186–191 (KTKPTQ), and K222. UTP is bound by residues 186–191 (KTKPTQ) and K222. In terms of domain architecture, Glutamine amidotransferase type-1 spans 291-546 (RVAIVGKYTQ…IRAAVEVSRL (256 aa)). L-glutamine is bound at residue G353. The active-site Nucleophile; for glutamine hydrolysis is the C380. L-glutamine-binding positions include 381–384 (LGMQ), E404, and R474. Active-site residues include H519 and E521.

Belongs to the CTP synthase family. As to quaternary structure, homotetramer.

It catalyses the reaction UTP + L-glutamine + ATP + H2O = CTP + L-glutamate + ADP + phosphate + 2 H(+). It carries out the reaction L-glutamine + H2O = L-glutamate + NH4(+). The enzyme catalyses UTP + NH4(+) + ATP = CTP + ADP + phosphate + 2 H(+). It participates in pyrimidine metabolism; CTP biosynthesis via de novo pathway; CTP from UDP: step 2/2. Its activity is regulated as follows. Allosterically activated by GTP, when glutamine is the substrate; GTP has no effect on the reaction when ammonia is the substrate. The allosteric effector GTP functions by stabilizing the protein conformation that binds the tetrahedral intermediate(s) formed during glutamine hydrolysis. Inhibited by the product CTP, via allosteric rather than competitive inhibition. Catalyzes the ATP-dependent amination of UTP to CTP with either L-glutamine or ammonia as the source of nitrogen. Regulates intracellular CTP levels through interactions with the four ribonucleotide triphosphates. In Cereibacter sphaeroides (strain ATCC 17025 / ATH 2.4.3) (Rhodobacter sphaeroides), this protein is CTP synthase.